The chain runs to 84 residues: Tenecin-1 (84 aa).

A signal peptide spans 1–19; the sequence is MKLTIFALVACFFILQIAA. Positions 20 to 41 are excised as a propeptide; sequence FPLEEAATAEEIEQGEHIRVKR. Cystine bridges form between cysteine 44/cysteine 75, cysteine 61/cysteine 81, and cysteine 65/cysteine 83.

The protein belongs to the invertebrate defensin family. Type 1 subfamily.

It is found in the secreted. Bactericidal protein produced in response to injury. It is cytotoxic to Gram-positive bacteria. This Tenebrio molitor (Yellow mealworm beetle) protein is Tenecin-1.